The primary structure comprises 199 residues: Elongation factor Ts, chloroplastic (199 aa).

The protein belongs to the EF-Ts family.

The protein localises to the plastid. The protein resides in the chloroplast. In terms of biological role, associates with the EF-Tu.GDP complex and induces the exchange of GDP to GTP. It remains bound to the aminoacyl-tRNA.EF-Tu.GTP complex up to the GTP hydrolysis stage on the ribosome. In Galdieria sulphuraria (Red alga), this protein is Elongation factor Ts, chloroplastic (tsf).